Here is a 157-residue protein sequence, read N- to C-terminus: UPF0212 protein rrnAC1165 (157 aa).

The tract at residues 105-157 (VLEIEEIPEESDETTEDESSSAESEADADDPPSDQSADESDDVLPEFEELIDE) is disordered. Residues 106-157 (LEIEEIPEESDETTEDESSSAESEADADDPPSDQSADESDDVLPEFEELIDE) show a composition bias toward acidic residues.

It belongs to the UPF0212 family.

This Haloarcula marismortui (strain ATCC 43049 / DSM 3752 / JCM 8966 / VKM B-1809) (Halobacterium marismortui) protein is UPF0212 protein rrnAC1165.